A 125-amino-acid polypeptide reads, in one-letter code: Small ribosomal subunit protein uS13 (125 aa).

The protein belongs to the universal ribosomal protein uS13 family. As to quaternary structure, part of the 30S ribosomal subunit. Forms a loose heterodimer with protein S19. Forms two bridges to the 50S subunit in the 70S ribosome.

Its function is as follows. Located at the top of the head of the 30S subunit, it contacts several helices of the 16S rRNA. In the 70S ribosome it contacts the 23S rRNA (bridge B1a) and protein L5 of the 50S subunit (bridge B1b), connecting the 2 subunits; these bridges are implicated in subunit movement. Contacts the tRNAs in the A and P-sites. This is Small ribosomal subunit protein uS13 from Gluconacetobacter diazotrophicus (strain ATCC 49037 / DSM 5601 / CCUG 37298 / CIP 103539 / LMG 7603 / PAl5).